A 235-amino-acid chain; its full sequence is Class B acid phosphatase (235 aa).

A signal peptide spans 1 to 22 (MKNLVKLSLIAMLTAATLPAMA). D67 functions as the Nucleophile in the catalytic mechanism. D67 and D69 together coordinate Mg(2+). Residue D69 is the Proton donor of the active site. Substrate-binding positions include 135 to 136 (TG) and K175. Position 190 (D190) interacts with Mg(2+).

This sequence belongs to the class B bacterial acid phosphatase family. Homotetramer. Requires Mg(2+) as cofactor.

It localises to the periplasm. The catalysed reaction is a phosphate monoester + H2O = an alcohol + phosphate. In terms of biological role, dephosphorylates several organic phosphate monoesters. Also has a phosphotransferase activity catalyzing the transfer of low-energy phosphate groups from organic phosphate monoesters to free hydroxyl groups of various organic compounds. This chain is Class B acid phosphatase, found in Aggregatibacter actinomycetemcomitans serotype C (strain D11S-1) (Actinobacillus actinomycetemcomitans).